Reading from the N-terminus, the 493-residue chain is Flagellin (493 aa).

This sequence belongs to the bacterial flagellin family.

The protein resides in the secreted. It localises to the bacterial flagellum. In terms of biological role, flagellin is the subunit protein which polymerizes to form the filaments of bacterial flagella. In Salmonella rubislaw, this protein is Flagellin (fliC).